A 200-amino-acid polypeptide reads, in one-letter code: Large ribosomal subunit protein uL18 (200 aa).

Belongs to the universal ribosomal protein uL18 family. In terms of assembly, part of the 50S ribosomal subunit. Contacts the 5S and 23S rRNAs.

In terms of biological role, this is one of the proteins that bind and probably mediate the attachment of the 5S RNA into the large ribosomal subunit, where it forms part of the central protuberance. This chain is Large ribosomal subunit protein uL18, found in Thermococcus sibiricus (strain DSM 12597 / MM 739).